The following is a 273-amino-acid chain: 4-hydroxy-tetrahydrodipicolinate reductase (273 aa).

Residues 8 to 13 (GALGRM), D35, 103 to 105 (GTT), and 129 to 132 (SQNY) contribute to the NAD(+) site. H161 acts as the Proton donor/acceptor in catalysis. Position 162 (H162) interacts with (S)-2,3,4,5-tetrahydrodipicolinate. The active-site Proton donor is the K165. 171–172 (GT) lines the (S)-2,3,4,5-tetrahydrodipicolinate pocket.

Belongs to the DapB family.

Its subcellular location is the cytoplasm. The catalysed reaction is (S)-2,3,4,5-tetrahydrodipicolinate + NAD(+) + H2O = (2S,4S)-4-hydroxy-2,3,4,5-tetrahydrodipicolinate + NADH + H(+). The enzyme catalyses (S)-2,3,4,5-tetrahydrodipicolinate + NADP(+) + H2O = (2S,4S)-4-hydroxy-2,3,4,5-tetrahydrodipicolinate + NADPH + H(+). The protein operates within amino-acid biosynthesis; L-lysine biosynthesis via DAP pathway; (S)-tetrahydrodipicolinate from L-aspartate: step 4/4. In terms of biological role, catalyzes the conversion of 4-hydroxy-tetrahydrodipicolinate (HTPA) to tetrahydrodipicolinate. The polypeptide is 4-hydroxy-tetrahydrodipicolinate reductase (Methanococcus aeolicus (strain ATCC BAA-1280 / DSM 17508 / OCM 812 / Nankai-3)).